A 407-amino-acid chain; its full sequence is Expansin-like protein 2 (407 aa).

A signal peptide spans 1-23 (MKMKNFLSKSLLVLLIGLIGVKS). Residues 42–141 (HGNCGYEQLT…KKVSCDVTGN (100 aa)) form the Expansin-like EG45 domain. 2 cysteine pairs are disulfide-bonded: Cys45–Cys75 and Cys78–Cys136. Residues Asn70, Asn117, and Asn387 are each glycosylated (N-linked (GlcNAc...) asparagine).

Belongs to the expansin family. Expansin A subfamily.

The protein resides in the secreted. Unlikely to encode with a protein with expansin activity. This chain is Expansin-like protein 2 (expl2), found in Dictyostelium discoideum (Social amoeba).